Reading from the N-terminus, the 79-residue chain is U-actitoxin-Bgr3d (79 aa).

The signal sequence occupies residues 1 to 21; it reads MSYERLLCLVLVASFIAASVA. Residues 22 to 38 constitute a propeptide that is removed on maturation; the sequence is QHPGDAPRMEDDSSAIQ. 3 disulfide bridges follow: Cys-44-Cys-76, Cys-46-Cys-69, and Cys-59-Cys-77.

This sequence belongs to the sea anemone type 3 (BDS) potassium channel toxin family.

It localises to the secreted. The protein resides in the nematocyst. Functionally, potently and selectively inhibits voltage-gated potassium channels Kv11/KCNH/ERG. Acts as a gating-modifier toxin that shifts the voltage-dependence of ERG activation in the positive direction and suppresses its current amplitudes elicited by strong depolarizing pulses that maximally activate the channels. The polypeptide is U-actitoxin-Bgr3d (Bunodosoma granuliferum (Red warty sea anemone)).